The primary structure comprises 530 residues: Transcriptional regulator VasH (530 aa).

Residues 193-422 enclose the Sigma-54 factor interaction domain; that stretch reads LIGESAAMQK…LKHLIEFGCA (230 aa). ATP is bound by residues 221–228 and 284–293; these read GETGTGKE and ANGGTLFLDE.

Its function is as follows. Transcriptional regulator of the type VI secretion system. The polypeptide is Transcriptional regulator VasH (Vibrio cholerae serotype O1 (strain ATCC 39315 / El Tor Inaba N16961)).